We begin with the raw amino-acid sequence, 92 residues long: Putative lambdoid prophage defective integrase (92 aa).

Belongs to the 'phage' integrase family.

This Escherichia coli O157:H7 protein is Putative lambdoid prophage defective integrase (intG).